Reading from the N-terminus, the 119-residue chain is MVKLAFPRELRLLTPSHFTFVFQQPQRAGTPQITILGRMNSLGHPRIGLTVAKKHVKRAHERNRIKRLTRESFRLHQHSLPSMDFVVLVKKGVSELDNRTLTEALEKLWRRHCRLAPDC.

Belongs to the RnpA family. As to quaternary structure, consists of a catalytic RNA component (M1 or rnpB) and a protein subunit.

The catalysed reaction is Endonucleolytic cleavage of RNA, removing 5'-extranucleotides from tRNA precursor.. RNaseP catalyzes the removal of the 5'-leader sequence from pre-tRNA to produce the mature 5'-terminus. It can also cleave other RNA substrates such as 4.5S RNA. The protein component plays an auxiliary but essential role in vivo by binding to the 5'-leader sequence and broadening the substrate specificity of the ribozyme. The protein is Ribonuclease P protein component of Pectobacterium atrosepticum (strain SCRI 1043 / ATCC BAA-672) (Erwinia carotovora subsp. atroseptica).